The primary structure comprises 329 residues: Segregation and condensation protein B (329 aa).

Disordered stretches follow at residues 1–39 (MTTG…GPAD), 252–274 (IVEK…SDPA), and 286–329 (SEAA…PKPE).

Belongs to the ScpB family. Homodimer. Homodimerization may be required to stabilize the binding of ScpA to the Smc head domains. Component of the Structural Maintenance of Chromosome (SMC) condensin-like complex composed of ScpA, ScpB and the Smc homodimer. ScpA and ScpB bind to the head domain of Smc, the presence of the three proteins is required for the association of the complex with DNA.

Its subcellular location is the cytoplasm. Functionally, a conditionally essential component of the chromosome segregation machinery. Required for chromosome condensation and partitioning. Important for positioning and anchoring of ParB-parS complexes (ori of replication) in the subpolar region, and of the ter replication site, as well as for segration of the ParB-parS complex and thus chromosome segregation. Probably acts via the formation of a condensin-like complex containing Smc, ScpA and ScpB that pulls DNA away from mid-cell into both cell halves. The polypeptide is Segregation and condensation protein B (Myxococcus xanthus (strain DK1622)).